The primary structure comprises 291 residues: MAVGKEILTKIRSVQNTQKITKAMQMVSTSKMRKTQERMRLARPYAEKVRMVMSHLAQTNTDHGIPLLESHREIRRVGFILITSDKGLCGGLNANVLKKFLAQVQEYRNQGIEEEIVCFGSKGLMACQSIGLNVVASAVNLGDTPKMEMLLGPLTELFQRYEKHEIDRIHLVYSGFVNTMRQEPRMEVLLPIGENVIGDSAPKSPFSWEYRYEPTALAVLEYLVRRYLESVVYQALSDNMASEQAARMVAMKAATDNAGNAIKELRLVYNKSRQAAITTELSEIVAGAAAV.

It belongs to the ATPase gamma chain family. As to quaternary structure, F-type ATPases have 2 components, CF(1) - the catalytic core - and CF(0) - the membrane proton channel. CF(1) has five subunits: alpha(3), beta(3), gamma(1), delta(1), epsilon(1). CF(0) has three main subunits: a, b and c.

The protein resides in the cell inner membrane. Its function is as follows. Produces ATP from ADP in the presence of a proton gradient across the membrane. The gamma chain is believed to be important in regulating ATPase activity and the flow of protons through the CF(0) complex. The chain is ATP synthase gamma chain from Neisseria meningitidis serogroup B (strain ATCC BAA-335 / MC58).